The primary structure comprises 1127 residues: MPKFPQFRLILVLFYLISMIQWSVITFSLGFFLNVCIFAYFVFFKSLPDLPKPQPRFVDIVPESSNTVDVDKELKSVEGLIQDGNAQIGKELESIVNLIIKDFVQPWFTKIDKNSDAEFLKVIKWRLLQTLLVVKDKLMKNDSASLIVLKLLPIFNKHFSTFCDAREAVLSDLTLERHKSANIDLQIAVEFNKNYKIHKSLSLKPNALQKEIEKSIRKTVIGLLPHLFDNDELDSLLVFTLMTEVLTTCIISPLIFKFTDPDSWNLRIVSLSQNYFEEKHKVHKIRRMLSKELQDHRKVMNDVANKDVGEPSSEKLELNAEYTGKQFEHYLNQLDSLLDLSDIKYVAYSLALKIYQLKENEHLTKENLKYKKRLLLSLNLIESKLSFPGSEIDTASKKLAREANYPDLNMDNGIVLKEMASFLTSITLKDIVDDSEFLPFFESFLGSVPETQGSTFLEYSQTIESFKNPLEDATSEDIISGYSGISTMQLQEISSKFFHNNNLQNMKLLDEGLVKNIILFRNSFQINNDEDTFILARKSVLLLQTEAIKYLDDRFLPLFKKTPSFLKMLSTSHIISTDIYAHFLSRIGGVNNPEQNKIIKDNVKTDFMNPVRIFANPGITDALDNIVNGSGSKPHKSRISSNPRYSQLFGSENDNIFKDKLFDDENDNTSEISVVEDQLDHPRNMEKVSVSSGNSGLNPSQFYGSNNFRDNIASLTISIDQIEKELELLRHLILKADLTNNQMQLKILKKSQRTLLKELEMKELLKQQYMVQENGNSLFRKTKIYIRSYFSENSSNGLKEITYYIINIHHFNNGQVSSWDMARRYNEFFELNTYLKKNFRDLMRQLQDLFPSKVKMSLKYHVTKTLLYEERKQKLEKYLRELLSISEICEDNIFRRFLTDPTPFKLNKEYMHDDILEEPLHEPIGSSNSTSNSSSVVDLQSSEDGGELNFYEDERHFFTDSGYPFYSQNKSFVKQICDLFISLFALNKANAGWLRGRAIITVLQQLLGSTIEKYIKVSIQKLRSEDQVFEAIVTFKNMLWGDNGLFERKRNETAEATRSEGERLRTEQLALTSLQRLFADTCGRVVGLRDSHEAAGRVHAMLQNPYLNASLLLEALDAILLDIICND.

Residues 85 to 273 (NAQIGKELES…WNLRIVSLSQ (189 aa)) enclose the PXA domain. S670, S673, and S692 each carry phosphoserine. Residues 705–762 (SNNFRDNIASLTISIDQIEKELELLRHLILKADLTNNQMQLKILKKSQRTLLKELEMK) are a coiled coil. The PX domain maps to 782–905 (TKIYIRSYFS…RFLTDPTPFK (124 aa)).

It belongs to the sorting nexin family.

Its subcellular location is the cytoplasm. Its function is as follows. Essential for mitotic growth. Mediates organelle inheritance. The protein is Structural protein MDM1 (MDM1) of Saccharomyces cerevisiae (strain ATCC 204508 / S288c) (Baker's yeast).